A 465-amino-acid polypeptide reads, in one-letter code: D-ornithine/D-lysine decarboxylase (465 aa).

Lys80 is subject to N6-(pyridoxal phosphate)lysine. Pyridoxal 5'-phosphate-binding positions include Gly259 and 307–310; that span reads EPGR. Catalysis depends on Cys387, which acts as the Proton donor. Position 422 (Tyr422) interacts with pyridoxal 5'-phosphate.

The protein belongs to the Orn/Lys/Arg decarboxylase class-II family. Homodimer. Pyridoxal 5'-phosphate is required as a cofactor.

It carries out the reaction D-ornithine + H(+) = putrescine + CO2. It catalyses the reaction D-lysine + H(+) = cadaverine + CO2. In terms of biological role, catalyzes the decarboxylation of D-ornithine and D-lysine. Ornithine is likely the physiological substrate. Has no detectable diaminopimelate decarboxylase activity in vitro. The sequence is that of D-ornithine/D-lysine decarboxylase from Salmonella typhimurium (strain LT2 / SGSC1412 / ATCC 700720).